The sequence spans 260 residues: Putative ABC transporter ATP-binding protein PH0132 (260 aa).

Residues 2–234 (IEFRDVWFWY…DLEGFGLKEP (233 aa)) form the ABC transporter domain. Position 34 to 41 (34 to 41 (GPNGSGKT)) interacts with ATP.

It belongs to the ABC transporter superfamily.

It localises to the cell membrane. In terms of biological role, probably part of an ABC transporter complex. Responsible for energy coupling to the transport system. The protein is Putative ABC transporter ATP-binding protein PH0132 of Pyrococcus horikoshii (strain ATCC 700860 / DSM 12428 / JCM 9974 / NBRC 100139 / OT-3).